A 314-amino-acid polypeptide reads, in one-letter code: Periplasmic [NiFe] hydrogenase small subunit (314 aa).

The tat-type signal signal peptide spans 1–49 (MNFSVGLGRDDAEKRLVQNGVSRRDFMKFCATVAAAMGMGPAFAPKVAE). [4Fe-4S] cluster-binding residues include C67, C70, C164, C197, H234, C237, C262, and C268. [3Fe-4S] cluster is bound by residues C277, C295, and C298.

This sequence belongs to the [NiFe]/[NiFeSe] hydrogenase small subunit family. In terms of assembly, heterodimer of a large and a small subunit. The cofactor is [4Fe-4S] cluster. [3Fe-4S] cluster serves as cofactor. Predicted to be exported by the Tat system. The position of the signal peptide cleavage has been experimentally proven.

The protein localises to the periplasm. It catalyses the reaction 2 Fe(III)-[cytochrome c3] + H2 = 2 Fe(II)-[cytochrome c3] + 2 H(+). Involved in hydrogen uptake for the anaerobic reduction of sulfate to hydrogen sulfide in an electron transport chain. Cytochrome c3 is the physiological electron acceptor. The chain is Periplasmic [NiFe] hydrogenase small subunit (hydA) from Solidesulfovibrio fructosivorans (Desulfovibrio fructosivorans).